We begin with the raw amino-acid sequence, 160 residues long: Myosin catalytic light chain LC-1, mantle muscle (160 aa).

X1 is subject to Blocked amino end (Xaa). 3 EF-hand domains span residues 7 to 44 (DEIEEVREVFDLFDFWDGRDGDVDAAKVGDLLRCLGMN), 83 to 118 (TAADEFMEAFKTFDREGQGLISSAEIRNVLKMLGER), and 119 to 153 (ITEDQCNDIFTFCDIREDIDGNIKYEDLMKKVMAG).

In molluscan muscle, calcium regulation is associated with myosin rather than with actin. Muscle myosin contains two types of light chains: the catalytic light chain, essential for ATPase activity, and the regulatory light chain, a calcium-binding protein responsible for Ca(2+) dependent binding and Ca(2+) dependent Mg-ATPase activity. The polypeptide is Myosin catalytic light chain LC-1, mantle muscle (Todarodes pacificus (Japanese flying squid)).